We begin with the raw amino-acid sequence, 877 residues long: Probable alpha/beta-glucosidase agdC (877 aa).

An N-terminal signal peptide occupies residues 1 to 14 (MLGSLLLLAPLAGA). 3 N-linked (GlcNAc...) asparagine glycosylation sites follow: Asn171, Asn293, and Asn373. Residue Asp422 is the Nucleophile of the active site. The active site involves Glu425. Residues 432–476 (DPCTDPERYSSENNLPPAPPPVRSSSPRPLPGFPADFQPSSASRS) form a disordered region. The span at 447 to 463 (PPAPPPVRSSSPRPLPG) shows a compositional bias: pro residues. Asn508 is a glycosylation site (N-linked (GlcNAc...) asparagine). Asp573 functions as the Proton donor in the catalytic mechanism. Asn574, Asn610, and Asn744 each carry an N-linked (GlcNAc...) asparagine glycan.

The protein belongs to the glycosyl hydrolase 31 family.

Its subcellular location is the secreted. It carries out the reaction Hydrolysis of terminal, non-reducing (1-&gt;4)-linked alpha-D-glucose residues with release of alpha-D-glucose.. It catalyses the reaction Hydrolysis of terminal, non-reducing beta-D-glucosyl residues with release of beta-D-glucose.. Functionally, glucosidase involved in the degradation of cellulosic biomass. Has both alpha- and beta-glucosidase activity. The polypeptide is Probable alpha/beta-glucosidase agdC (agdC) (Aspergillus flavus (strain ATCC 200026 / FGSC A1120 / IAM 13836 / NRRL 3357 / JCM 12722 / SRRC 167)).